We begin with the raw amino-acid sequence, 204 residues long: THO complex subunit 7 homolog (204 aa).

Gly2 carries the N-acetylglycine modification. The residue at position 5 (Thr5) is a Phosphothreonine. Lys36 carries the post-translational modification N6-acetyllysine. The interaction with THOC5 stretch occupies residues 50-137 (YQRMLSTLSQ…HHPDRHETLK (88 aa)). Residues 105-204 (QILQAKRIRK…ESTMEADPKP (100 aa)) form an interaction with NIF3L1 region. Residues 146 to 204 (LEHLSHIKESVEDKLELRRKQFHVLLSTIHELQQTLENDDKLSEVDEAQESTMEADPKP) are a coiled coil. The disordered stretch occupies residues 182–204 (ENDDKLSEVDEAQESTMEADPKP).

The protein belongs to the THOC7 family. In terms of assembly, tetramer; as part of a THO-DDX39B complex. Component of the THO subcomplex, which is composed of THOC1, THOC2, THOC3, THOC5, THOC6 and THOC7. Component of the transcription/export (TREX) complex at least composed of ALYREF/THOC4, DDX39B, SARNP/CIP29, CHTOP and the THO subcomplex; in the complex interacts with THOC1, THOC2 and THOC5; forms a coiled-coil dimer with THOC5; together with THOC5 and THOC6, plays a key structural role in the oligomerization of the THO-DDX39B complex. TREX seems to have a dynamic structure involving ATP-dependent remodeling. Interacts with NIF3L1. In terms of tissue distribution, ubiquitously expressed.

It is found in the cytoplasm. It localises to the nucleus. Its subcellular location is the nucleus speckle. Component of the THO subcomplex of the TREX complex which is thought to couple mRNA transcription, processing and nuclear export, and which specifically associates with spliced mRNA and not with unspliced pre-mRNA. Required for efficient export of polyadenylated RNA. Plays a key structural role in the oligomerization of the THO-DDX39B complex. TREX is recruited to spliced mRNAs by a transcription-independent mechanism, binds to mRNA upstream of the exon-junction complex (EJC) and is recruited in a splicing- and cap-dependent manner to a region near the 5' end of the mRNA where it functions in mRNA export to the cytoplasm via the TAP/NXF1 pathway. The chain is THO complex subunit 7 homolog (Thoc7) from Mus musculus (Mouse).